Here is a 223-residue protein sequence, read N- to C-terminus: Ubiquitin carboxyl-terminal hydrolase isozyme L1 (223 aa).

An N-acetylmethionine modification is found at methionine 1. Positions 2 to 221 (QLKPMEINPE…VRFSAVALCK (220 aa)) constitute a UCH catalytic domain. Residues 5–10 (PMEINP) form an interaction with ubiquitin region. The active-site Nucleophile is the cysteine 90. At serine 125 the chain carries Phosphoserine. The Proton donor role is filled by histidine 161. The segment at 211 to 216 (EVRFSA) is interaction with ubiquitin. Cysteine 220 carries the S-farnesyl cysteine lipid modification. A propeptide spans 221–223 (KAA) (removed in mature form).

The protein belongs to the peptidase C12 family. In terms of assembly, monomer. Homodimer. Interacts with COPS5 and SNCA. In terms of processing, O-glycosylated. As to expression, expressed in the placenta at all stages of pregnancy. Expression increases as pregnancy progresses.

It localises to the cytoplasm. The protein localises to the endoplasmic reticulum membrane. The protein resides in the nucleus. The enzyme catalyses Thiol-dependent hydrolysis of ester, thioester, amide, peptide and isopeptide bonds formed by the C-terminal Gly of ubiquitin (a 76-residue protein attached to proteins as an intracellular targeting signal).. In terms of biological role, ubiquitin-protein hydrolase involved both in the processing of ubiquitin precursors and of ubiquitinated proteins. This enzyme is a thiol protease that recognizes and hydrolyzes a peptide bond at the C-terminal glycine of ubiquitin. Also binds to free monoubiquitin and may prevent its degradation in lysosomes. The homodimer may have ATP-independent ubiquitin ligase activity. The sequence is that of Ubiquitin carboxyl-terminal hydrolase isozyme L1 (UCHL1) from Macaca fascicularis (Crab-eating macaque).